A 444-amino-acid polypeptide reads, in one-letter code: Trigger factor (444 aa).

The region spanning 160-245 (DMQVTFDFEG…VKQVEKPKLP (86 aa)) is the PPIase FKBP-type domain.

It belongs to the FKBP-type PPIase family. Tig subfamily.

It localises to the cytoplasm. It carries out the reaction [protein]-peptidylproline (omega=180) = [protein]-peptidylproline (omega=0). Functionally, involved in protein export. Acts as a chaperone by maintaining the newly synthesized protein in an open conformation. Functions as a peptidyl-prolyl cis-trans isomerase. The chain is Trigger factor from Acinetobacter baylyi (strain ATCC 33305 / BD413 / ADP1).